The primary structure comprises 48 residues: Ribulose bisphosphate carboxylase large chain (48 aa).

This sequence belongs to the RuBisCO large chain family. Type I subfamily. In terms of assembly, heterohexadecamer of 8 large chains and 8 small chains.

It is found in the plastid. The protein resides in the chloroplast. It carries out the reaction 2 (2R)-3-phosphoglycerate + 2 H(+) = D-ribulose 1,5-bisphosphate + CO2 + H2O. It catalyses the reaction D-ribulose 1,5-bisphosphate + O2 = 2-phosphoglycolate + (2R)-3-phosphoglycerate + 2 H(+). RuBisCO catalyzes two reactions: the carboxylation of D-ribulose 1,5-bisphosphate, the primary event in carbon dioxide fixation, as well as the oxidative fragmentation of the pentose substrate in the photorespiration process. Both reactions occur simultaneously and in competition at the same active site. This is Ribulose bisphosphate carboxylase large chain (rbcL) from Pinus pinaster (Maritime pine).